A 222-amino-acid chain; its full sequence is MEKLSLCLLVIISLSNAFAQTDMIGKAFVFPKESENSYVSLTARLTKPLTAFTVCLRVYTDLNRDYSLFSYATKTQYNEILLFRGKTAVYSISVGGADVVFKPHQSSEPMHFCMTWESTSGITELWVDGKPMVRRSLKRGYSLGTQASIILGQEQDAFAGGFEKNQCLVGDIGDVNMWDYVLSPEEINTVYAGGTFSPNVLNWRALRYEMSGEVYVKPQLWP.

The signal sequence occupies residues 1-19; the sequence is MEKLSLCLLVIISLSNAFA. Gln20 carries the post-translational modification Pyrrolidone carboxylic acid. The 199-residue stretch at 24–222 folds into the Pentraxin (PTX) domain; that stretch reads IGKAFVFPKE…EVYVKPQLWP (199 aa). A disulfide bridge connects residues Cys55 and Cys113. Asn78, Glu154, Gln155, Asp156, and Gln166 together coordinate Ca(2+).

This sequence belongs to the pentraxin family. As to quaternary structure, homopentamer. Pentraxin (or pentaxin) have a discoid arrangement of 5 non-covalently bound subunits. Interacts with FCN1; may regulate monocyte activation by FCN1. Requires Ca(2+) as cofactor. As to expression, found in plasma.

It localises to the secreted. Its function is as follows. Displays several functions associated with host defense: it promotes agglutination, bacterial capsular swelling, phagocytosis and complement fixation through its calcium-dependent binding to phosphorylcholine. Can interact with DNA and histones and may scavenge nuclear material released from damaged circulating cells. This is C-reactive protein (CRP) from Sus scrofa (Pig).